We begin with the raw amino-acid sequence, 1151 residues long: MDEYDKKRRLEHGGSDRSRSSNDNRNSHGSSGNNYRDDRKDDRYYRDDRSHYNNNNNNNNNNNNNNNNNNGNGYRDDRNYSSQNKYQNHHQQSPPQQQQQQQNSSYVPSQPPQQQTQTQQQPHIQAPPPAKPRKSRFDQAPETIPIQAPQQPPMISNQPIFKQQPMYQQPMYQQKQQQPQPPIFQQQQKQQQPPIFQHHQPPPIYQQPPVYQQQQQQQQPVFQQQQQQRVATEAIQFQQTPQQLAIEQERLKQERENEKKIEQANLEEEMKKRREKVEQWRKQKLEQELKASGSSNSGSTSSPPTTTTTTTKTTAATTTATTSPLTIPSQQQQTATTSPIKKKWSLEEEEETAQPLVNTNIEQKEIKLPPTANIPAAAATTTSATINTTTIKQSIEEDDDIDPLDAYMENLNKEANLNLKKSKTSQMIDDDEKLEEESEGEDDGKDKTIKKGKKEMLHTDHTSIKYAEFQKNFYIEVPVLANMTETEVLDFRSELGVKITGKDCPKPIQSWAQAGLTEKVHLLLKKFQYEKPTSIQAQTIPAIMNGRDLIGIARTGSGKTLAFLLPMFRHILAQPKSAPGEGMIALIMSPTRELALQIHVECKKFSKVLGLRTACVYGGASISEQIAELKRGADIVVCTPGRMIDILCANNRRITNLRRVTFLVLDEADRMFDMGFGPQINCIVDSIRPDRQTIMFSATFPPKVENVAKKILNKPLEIIAGGRSIVSSDIEQFVEVRPTETRFRRLIELLSIWYHKGQILIFTNRQETTDNLYRQLSNSQYQCLSLHGSKDQTDRDETISDFKNKVKTILIATPLASRGLDIKDLNLVVNFDCPDHLEDYVHRVGRTGRAGNRGTAYTFITPDEERFSSSIIKALEQSGSKVPDELRKLNDTYEKKRKEGKDVLLAPTGFTGRGHKFDAAEEDKKNIERKQQRKAYGIEEEEEEEDEDKEKAEKEKLAAASAEKEKQLLSEKEKLDPATTNTIVIPGVDGTIITPSSLLQTDPSVPVGQQAINQIFGISQVTSSEEAIKKLQLAAQLGMKGNIQKLNNQITPLNQTHFIEELEINDYSQQARWKVTHKDALLEITNFTNTTITTKGTFFPPNKIPAPGERKLYLYIEGPSDASVKNAKSDIKKILDEVQSTHQSTGKYSVF.

Composition is skewed to basic and acidic residues over residues 1–26 (MDEY…DNRN) and 35–51 (YRDD…DRSH). 4 disordered regions span residues 1-138 (MDEY…SRFD), 166-224 (MYQQ…VFQQ), 287-358 (QELK…PLVN), and 424-449 (TSQM…DKTI). Residues 52–73 (YNNNNNNNNNNNNNNNNNNGNG) show a composition bias toward low complexity. The segment covering 81–90 (SSQNKYQNHH) has biased composition (polar residues). Composition is skewed to low complexity over residues 91–124 (QQSP…QPHI), 166–199 (MYQQ…FQHH), 207–224 (QPPV…VFQQ), and 291–339 (ASGS…TTSP). Over residues 428-443 (IDDDEKLEEESEGEDD) the composition is skewed to acidic residues. A Q motif motif is present at residues 509-537 (QSWAQAGLTEKVHLLLKKFQYEKPTSIQA). The region spanning 540–718 (IPAIMNGRDL…KKILNKPLEI (179 aa)) is the Helicase ATP-binding domain. ATP is bound at residue 553–560 (ARTGSGKT). Residues 666–669 (DEAD) carry the DEAD box motif. The region spanning 729–890 (DIEQFVEVRP…KVPDELRKLN (162 aa)) is the Helicase C-terminal domain. The interval 904–972 (LLAPTGFTGR…EKEKQLLSEK (69 aa)) is disordered. Basic and acidic residues predominate over residues 915-930 (HKFDAAEEDKKNIERK). A compositionally biased stretch (acidic residues) spans 938–948 (IEEEEEEEDED). Residues 949–972 (KEKAEKEKLAAASAEKEKQLLSEK) are compositionally biased toward basic and acidic residues.

It belongs to the DEAD box helicase family. DDX46/PRP5 subfamily. As to quaternary structure, component of the 17S U2 SnRNP complex, a ribonucleoprotein complex that contains small nuclear RNA (snRNA) U2 and a number of specific proteins.

The protein resides in the nucleus speckle. It carries out the reaction ATP + H2O = ADP + phosphate + H(+). Component of the 17S U2 SnRNP complex of the spliceosome, a large ribonucleoprotein complex that removes introns from transcribed pre-mRNAs. In Dictyostelium discoideum (Social amoeba), this protein is ATP-dependent RNA helicase ddx46 (helB1).